The following is a 131-amino-acid chain: Replicase polyprotein 1ab (131 aa).

The Nidovirus-type SAM-dependent 2'-O-MTase domain maps to 1–128 (ITEFSWNKYL…KLLNFGNHFI (128 aa)).

Functionally, the replicase polyprotein of coronaviruses is a multifunctional protein: it contains the activities necessary for the transcription of negative stranded RNA, leader RNA, subgenomic mRNAs and progeny virion RNA as well as proteinases responsible for the cleavage of the polyprotein into functional products. This chain is Replicase polyprotein 1ab (rep), found in Sus scrofa (Pig).